Reading from the N-terminus, the 1241-residue chain is MIENWPKKPEGSQWTDDQWKAVVANGRDILVAAAAGSGKTAVLVERIIKKIINEENPVDVDRLLVVTFTNAAAQEMKNRIGEALEKVLIDEPGSQHVRKQLSLLNKASISTIHSFCLQVIRGYYYMLDVDPRFRIANQTENELLKEEVLDDILEEEYGIEDNTIFFELVDRYTSDRSDDDLQRMILALHTESRAHPNPEKWLDKLVEAYDVEGKTIEDLVYASYLLEDVKFQLETAEQHIRKATELAMLPDGPAPRIETLQADVALLGTLSSAARESWTSVYEAMQNVSWQTLKRIKKSDYNEDVVKQVDSLRNKAKDEVKKLQEELFSRKPESFLRDFQDMHPVLEKLVQLVKVFTERFQAMKRDKGMVDFTDLEHFCLQILSEQSENGEMNPSAVALQYRNKFAEVLVDEYQDTNFVQESIIKFVTKDSESEGNLFMVGDVKQSIYRFRLAEPGLFLGKYKRFTQEGLGGGMKIDLAKNFRSRHEVLAGTNFIFKQIMGEEVGEIDYDADAELKLGATYPEGEDVAAELLCIQQTEEEVIDGEEGAEVEKAQLEARLMAQRIKAMVDSGYEVYDRKNDSMRPVQYRDFVILLRSMPWAPQIMEELKLQGIPVYADLATGYFEATEVNIMMNVFRVIDNPMQDIPLAAVLRSPIVGLSDEELATLRAHGKKGSFYEVMSSFLKGAPLEEEQELHDKLEWFYNLLQGWREFARQQSLSDLIWKVYGETGYYDFVGGLPAGKQRQANLRVLYDRARQYEATSFRGLFRFLRFIERILERGDDMGTARALGEQEDVVRIMTIHKSKGLEFPVVFVAGLGRRFNTQDLMKRFLLHKDFGFGSQFIDPRKRIKYTTLSQLAIKRKMKMELIAEEMRVLYVALTRAKEKLILIGTVKDANKEMEKWLDAREHSEWLLPDHIRAGASCYLDWIAPSLYRHRDSEMLLELGQGSIPDEIYGYDTSWKVEVVDGNTLLAPEPVQEEKQELLEALREKKAVPLQSERKEEVYDRLMWKYGYEDATSHRAKQSVTEIKRNYQSEEGSDNAFIKKLRAPIKTRPRFMEKKGLTYAERGTAVHAVMQHVDLKKPITVEVLQEQIAGMVNKELLTFEQAEEIAIEKVISFFDSDLGKRVLAAKSVEREVPFTMMLAAEEAYQDWQGKSEETILVQGVIDCMIEEEDGITLIDFKTDTIEGKFPGGFEQAKPILEDRYKVQLSLYAKALEKSLQHPVKEKCLYFFDGNHVVNIEE.

Positions 12–485 constitute a UvrD-like helicase ATP-binding domain; the sequence is SQWTDDQWKA…IDLAKNFRSR (474 aa). 33-40 serves as a coordination point for ATP; sequence AAAGSGKT. In terms of domain architecture, UvrD-like helicase C-terminal spans 505–805; it reads GEIDYDADAE…RIMTIHKSKG (301 aa).

This sequence belongs to the helicase family. AddA subfamily. As to quaternary structure, heterodimer of AddA and AddB/RexB. Mg(2+) is required as a cofactor.

The catalysed reaction is Couples ATP hydrolysis with the unwinding of duplex DNA by translocating in the 3'-5' direction.. The enzyme catalyses ATP + H2O = ADP + phosphate + H(+). Functionally, the heterodimer acts as both an ATP-dependent DNA helicase and an ATP-dependent, dual-direction single-stranded exonuclease. Recognizes the chi site generating a DNA molecule suitable for the initiation of homologous recombination. The AddA nuclease domain is required for chi fragment generation; this subunit has the helicase and 3' -&gt; 5' nuclease activities. This chain is ATP-dependent helicase/nuclease subunit A, found in Bacillus cereus (strain ATCC 14579 / DSM 31 / CCUG 7414 / JCM 2152 / NBRC 15305 / NCIMB 9373 / NCTC 2599 / NRRL B-3711).